A 517-amino-acid polypeptide reads, in one-letter code: MDKNKIIVFDTTLRDGEQSPGCSMNTEEKIKVALQLEKLGVDVIEAGFAAASPGDFDAVSRIAQIIKNSSICSLARAVDNDIKQAGLAVQSAAKSRIHTFIATSPIHMQYKLKMSGDEVIKRAIRAVEYAKTFVDDVEFSLEDAGRSEIPFMKEVMDAVIGAGAKTINLPDTVGYRLPTELGAMVKELSAYAGDRAIISVHNHNDLGLATANTLAAVLNGARQIEVTINGLGERAGNSALEEAVMAIKTRKDAFGDLYTTINTPEIYATSRLVATITGVEPQQNKAIVGKNAFAHESGIHQDGVLKHQETYEIMKPEDVGVIKDSTLILGKHSGRAAFRDKIVQLGFDKVSDDELNAAFERFKVLADNKKEISDEDVRMLITDEALNHDKTYDLIGLQISDCTNGVPTAAVAIKYKDEIIKDAAIGDGTMDAIFKTIDRITGFSGELKDYKVISVTEGKDALAKVTTRVSFDETSPAFVGHGLSIDTMLATAKAYIGALNSYLSQKKRLSKSSEHQV.

In terms of domain architecture, Pyruvate carboxyltransferase spans 6 to 267; sequence IIVFDTTLRD…YTTINTPEIY (262 aa). 4 residues coordinate Mn(2+): Asp-15, His-201, His-203, and Asn-237. Residues 393–517 form a regulatory domain region; it reads DLIGLQISDC…RLSKSSEHQV (125 aa).

Belongs to the alpha-IPM synthase/homocitrate synthase family. LeuA type 1 subfamily. Homodimer. The cofactor is Mn(2+).

Its subcellular location is the cytoplasm. It catalyses the reaction 3-methyl-2-oxobutanoate + acetyl-CoA + H2O = (2S)-2-isopropylmalate + CoA + H(+). It functions in the pathway amino-acid biosynthesis; L-leucine biosynthesis; L-leucine from 3-methyl-2-oxobutanoate: step 1/4. In terms of biological role, catalyzes the condensation of the acetyl group of acetyl-CoA with 3-methyl-2-oxobutanoate (2-ketoisovalerate) to form 3-carboxy-3-hydroxy-4-methylpentanoate (2-isopropylmalate). This Aliarcobacter butzleri (strain RM4018) (Arcobacter butzleri) protein is 2-isopropylmalate synthase.